The sequence spans 216 residues: Thiamine-phosphate synthase (216 aa).

Residues 41-45 (QYREK) and Asn-73 each bind 4-amino-2-methyl-5-(diphosphooxymethyl)pyrimidine. Residues Asp-74 and Asp-93 each coordinate Mg(2+). Residue Ser-111 participates in 4-amino-2-methyl-5-(diphosphooxymethyl)pyrimidine binding. 137-139 (TTT) provides a ligand contact to 2-[(2R,5Z)-2-carboxy-4-methylthiazol-5(2H)-ylidene]ethyl phosphate. Lys-140 provides a ligand contact to 4-amino-2-methyl-5-(diphosphooxymethyl)pyrimidine. 2-[(2R,5Z)-2-carboxy-4-methylthiazol-5(2H)-ylidene]ethyl phosphate contacts are provided by residues Gly-168 and 188–189 (VS).

It belongs to the thiamine-phosphate synthase family. It depends on Mg(2+) as a cofactor.

It catalyses the reaction 2-[(2R,5Z)-2-carboxy-4-methylthiazol-5(2H)-ylidene]ethyl phosphate + 4-amino-2-methyl-5-(diphosphooxymethyl)pyrimidine + 2 H(+) = thiamine phosphate + CO2 + diphosphate. The catalysed reaction is 2-(2-carboxy-4-methylthiazol-5-yl)ethyl phosphate + 4-amino-2-methyl-5-(diphosphooxymethyl)pyrimidine + 2 H(+) = thiamine phosphate + CO2 + diphosphate. It carries out the reaction 4-methyl-5-(2-phosphooxyethyl)-thiazole + 4-amino-2-methyl-5-(diphosphooxymethyl)pyrimidine + H(+) = thiamine phosphate + diphosphate. Its pathway is cofactor biosynthesis; thiamine diphosphate biosynthesis; thiamine phosphate from 4-amino-2-methyl-5-diphosphomethylpyrimidine and 4-methyl-5-(2-phosphoethyl)-thiazole: step 1/1. Its function is as follows. Condenses 4-methyl-5-(beta-hydroxyethyl)thiazole monophosphate (THZ-P) and 2-methyl-4-amino-5-hydroxymethyl pyrimidine pyrophosphate (HMP-PP) to form thiamine monophosphate (TMP). The chain is Thiamine-phosphate synthase from Chloroflexus aurantiacus (strain ATCC 29366 / DSM 635 / J-10-fl).